Reading from the N-terminus, the 618-residue chain is tRNA endonuclease vms-1 (618 aa).

The C2H2-type zinc finger occupies 59–85; that stretch reads DQCTTCNCPVDFGDRAVLLEHYQSLFH. The VLRF1 domain occupies 170-311; sequence RPFDCAIFLW…SDCWQRLQQV (142 aa). Residue glutamine 213 is part of the active site. ANK repeat units follow at residues 437–466 and 470–496; these read NRST…CDSS and GAGL…VKNE. A disordered region spans residues 502 to 539; the sequence is ARTHIPEPKKKVELTEEQEREQAERKKEKKARQKEKEK. Residues 505–515 show a composition bias toward basic and acidic residues; it reads HIPEPKKKVEL. Residues 510–557 adopt a coiled-coil conformation; sequence KKKVELTEEQEREQAERKKEKKARQKEKEKLKKEIAKRDVEEMEERQK.

The protein belongs to the ANKZF1/VMS1 family. In larval stages and in adults, expressed in intestinal cells, specific neurons in the head and the tail, and in the ventral nerve cord.

The protein resides in the cytoplasm. The protein localises to the mitochondrion. Endonuclease that cleaves polypeptidyl-tRNAs downstream of the ribosome-associated quality control (RQC) pathway to release incompletely synthesized polypeptides for degradation. The RQC pathway disassembles aberrantly stalled translation complexes to recycle or degrade the constituent parts. Dispensable for viability and growth but is required for protection against oxidative stress and for wild-type life span. The protein is tRNA endonuclease vms-1 (vms-1) of Caenorhabditis elegans.